Here is a 100-residue protein sequence, read N- to C-terminus: UPF0213 protein YhbQ (100 aa).

A GIY-YIG domain is found at 2–77 (TPWYLYLIRT…KQLTKRQKER (76 aa)).

It belongs to the UPF0213 family.

The protein is UPF0213 protein YhbQ of Escherichia coli O8 (strain IAI1).